Here is a 74-residue protein sequence, read N- to C-terminus: ATP synthase subunit 9, mitochondrial (74 aa).

2 helical membrane passes run isoleucine 8 to phenylalanine 28 and isoleucine 50 to isoleucine 70.

This sequence belongs to the ATPase C chain family. In terms of assembly, F-type ATPases have 2 components, CF(1) - the catalytic core - and CF(0) - the membrane proton channel. CF(1) has five subunits: alpha(3), beta(3), gamma(1), delta(1), epsilon(1). CF(0) has three main subunits: a, b and c.

It is found in the mitochondrion membrane. In terms of biological role, mitochondrial membrane ATP synthase (F(1)F(0) ATP synthase or Complex V) produces ATP from ADP in the presence of a proton gradient across the membrane which is generated by electron transport complexes of the respiratory chain. F-type ATPases consist of two structural domains, F(1) - containing the extramembraneous catalytic core and F(0) - containing the membrane proton channel, linked together by a central stalk and a peripheral stalk. During catalysis, ATP synthesis in the catalytic domain of F(1) is coupled via a rotary mechanism of the central stalk subunits to proton translocation. Part of the complex F(0) domain. A homomeric c-ring of probably 10 subunits is part of the complex rotary element. This chain is ATP synthase subunit 9, mitochondrial (atp9), found in Schizosaccharomyces pombe (strain 972 / ATCC 24843) (Fission yeast).